We begin with the raw amino-acid sequence, 764 residues long: G-type lectin S-receptor-like serine/threonine-protein kinase SD3-1 (764 aa).

Residues 1–24 (MKMLRALLLCLSLVFFLAFQIVVS) form the signal peptide. Bulb-type lectin domains follow at residues 25 to 151 (EIQL…QSFG) and 154 to 279 (TDTL…WKPV). The Extracellular segment spans residues 25–442 (EIQLGSKLVV…TKSHSICIPC (418 aa)). N-linked (GlcNAc...) asparagine glycans are attached at residues asparagine 92, asparagine 198, and asparagine 248. In terms of domain architecture, EGF-like; atypical spans 283-320 (VENQCRVFATCGSQVCSFNSSGYTECNCPFNAFVSVSD). Disulfide bonds link cysteine 287–cysteine 298, cysteine 293–cysteine 308, cysteine 332–cysteine 413, cysteine 365–cysteine 388, and cysteine 369–cysteine 375. Asparagine 301 and asparagine 353 each carry an N-linked (GlcNAc...) asparagine glycan. The Apple domain maps to 332 to 413 (CKSGFNMVKF…LSSISYVKTC (82 aa)). N-linked (GlcNAc...) asparagine glycosylation occurs at asparagine 423. A helical transmembrane segment spans residues 443 to 463 (LVGATSTTLVLFLGFQLGIVV). The Cytoplasmic segment spans residues 464 to 764 (YIYRRKKKLA…SESSQSLYEP (301 aa)). The region spanning 466 to 764 (YRRKKKLAKK…SESSQSLYEP (299 aa)) is the Protein kinase domain. ATP contacts are provided by residues 508 to 516 (IGPQIFKGV) and lysine 526. A caM-binding region spans residues 586-603 (LRSKKLTWRIRTDTCLSV). Residues 738 to 764 (DPPPPPFACARSSPTNSSESSQSLYEP) are disordered. Residues 749-764 (SSPTNSSESSQSLYEP) are compositionally biased toward low complexity.

It localises to the cell membrane. It catalyses the reaction L-seryl-[protein] + ATP = O-phospho-L-seryl-[protein] + ADP + H(+). It carries out the reaction L-threonyl-[protein] + ATP = O-phospho-L-threonyl-[protein] + ADP + H(+). The protein is G-type lectin S-receptor-like serine/threonine-protein kinase SD3-1 (SD31) of Arabidopsis thaliana (Mouse-ear cress).